The primary structure comprises 251 residues: MSGHSKWATIKHAKGAADAKRGQLFTKLSREIIFAAKQGGPSPEGNARLRLAIQKAKDSRMPSDNIERAIKKGSGELEGTTVIEMILEGYGPGGVAVLVNGMSDNRNRTVSDVRHMFSKGGGSLAESGAVSWIFEAKGVIGVETAGLDTDELSLKAIDMGAEDVNTDEGYMEIYTAMPDMEKIRQQLETQGVTIDSAEINMVPKNTVKLDEETAMQVLKLLDKLEELDDVQTVSSNADFDPEVVEKYHSQA.

It belongs to the TACO1 family.

Its subcellular location is the cytoplasm. The protein is Probable transcriptional regulatory protein cbdbA400 of Dehalococcoides mccartyi (strain CBDB1).